The sequence spans 447 residues: Glutamate--tRNA ligase 1 (447 aa).

A 'HIGH' region motif is present at residues 10-20 (PSPTGMLHVGN). A 'KMSKS' region motif is present at residues 240–244 (KISKR). An ATP-binding site is contributed by lysine 243.

It belongs to the class-I aminoacyl-tRNA synthetase family. Glutamate--tRNA ligase type 1 subfamily. As to quaternary structure, monomer.

It is found in the cytoplasm. It carries out the reaction tRNA(Glu) + L-glutamate + ATP = L-glutamyl-tRNA(Glu) + AMP + diphosphate. Its function is as follows. Catalyzes the attachment of glutamate to tRNA(Glu) in a two-step reaction: glutamate is first activated by ATP to form Glu-AMP and then transferred to the acceptor end of tRNA(Glu). The polypeptide is Glutamate--tRNA ligase 1 (Rickettsia prowazekii (strain Madrid E)).